The chain runs to 156 residues: Cyanate hydratase (156 aa).

Residues arginine 96, glutamate 99, and serine 122 contribute to the active site.

The protein belongs to the cyanase family.

It carries out the reaction cyanate + hydrogencarbonate + 3 H(+) = NH4(+) + 2 CO2. In terms of biological role, catalyzes the reaction of cyanate with bicarbonate to produce ammonia and carbon dioxide. In Pseudomonas aeruginosa (strain LESB58), this protein is Cyanate hydratase.